A 522-amino-acid polypeptide reads, in one-letter code: ATP synthase subunit alpha (522 aa).

176 to 183 provides a ligand contact to ATP; it reads GDRQTGKT.

This sequence belongs to the ATPase alpha/beta chains family. In terms of assembly, F-type ATPases have 2 components, CF(1) - the catalytic core - and CF(0) - the membrane proton channel. CF(1) has five subunits: alpha(3), beta(3), gamma(1), delta(1), epsilon(1). CF(0) has four main subunits: a, b, b' and c.

Its subcellular location is the cell membrane. It catalyses the reaction ATP + H2O + 4 H(+)(in) = ADP + phosphate + 5 H(+)(out). In terms of biological role, produces ATP from ADP in the presence of a proton gradient across the membrane. The alpha chain is a regulatory subunit. The sequence is that of ATP synthase subunit alpha from Chloroflexus aggregans (strain MD-66 / DSM 9485).